Reading from the N-terminus, the 1250-residue chain is SRC kinase signaling inhibitor 1 (1250 aa).

A compositionally biased stretch (basic and acidic residues) spans 19 to 45; sequence AEGRARSPREEVGPRDPGGRGEPDPER. Residues 19-78 are disordered; that stretch reads AEGRARSPREEVGPRDPGGRGEPDPERSSPPMLSADDAEYPREYRTLGGGGGGGSGGRRF. Residues serine 47 and serine 52 each carry the phosphoserine modification. Positions 65-75 are enriched in gly residues; sequence LGGGGGGGSGG. Serine 79 carries the post-translational modification Phosphoserine. Phosphothreonine is present on threonine 86. A phosphoserine mark is found at serine 87, serine 98, serine 211, serine 233, serine 237, serine 247, and serine 293. Residue tyrosine 309 is modified to Phosphotyrosine. Residues 352 to 448 are disordered; it reads ASRESSPTRR…RRDVKPDEDL (97 aa). Positions 354–364 are enriched in polar residues; it reads RESSPTRRLNN. Over residues 365–374 the composition is skewed to low complexity; it reads LSPASHLASS. Phosphoserine is present on residues serine 366, serine 375, and serine 392. The span at 381–399 shows a compositional bias: low complexity; sequence PSGLPSGLPSGSPSRSRLS. An omega-N-methylarginine mark is found at arginine 397 and arginine 404. Residues serine 411, serine 430, and serine 432 each carry the phosphoserine modification. Residues 437 to 448 show a composition bias toward basic and acidic residues; sequence LERRDVKPDEDL. Tyrosine 464 carries the phosphotyrosine modification. The segment at 538-710 is disordered; the sequence is PSSPQKLADV…ASSTPAGQPT (173 aa). Pro residues predominate over residues 552 to 563; it reads GGPPPPHSPYSG. Phosphoserine occurs at positions 559, 562, and 566. Arginine 567 is subject to Omega-N-methylarginine. 5 positions are modified to phosphoserine: serine 569, serine 579, serine 581, serine 583, and serine 588. The segment covering 590-607 has biased composition (low complexity); the sequence is GGKARSTGSASTAGAPPS. Positions 628 to 640 are enriched in basic and acidic residues; sequence KDTETRERMEAME. Phosphoserine is present on residues serine 664 and serine 688. Phosphothreonine is present on residues threonine 691 and threonine 704. The span at 701-710 shows a compositional bias: low complexity; it reads ASSTPAGQPT. Coiled coils occupy residues 712-753 and 793-813; these read VSRL…RALL and EELI…IQRD. The segment at 714–764 is interaction with SNAP25; sequence RLQMQLHLRGLQNSASDLRGQLQQLRNVQLQNQESVRALLKPTEADVSMRV. Residues serine 911 and serine 933 each carry the phosphoserine modification. Disordered regions lie at residues 924–982 and 1016–1094; these read GLDF…ERDW and DCAS…TGEV. Position 951 is a phosphothreonine (threonine 951). Serine 1054 carries the phosphoserine modification. Over residues 1069-1078 the composition is skewed to pro residues; the sequence is KSPPPPPPRR. A phosphoserine mark is found at serine 1110 and serine 1127. The tract at residues 1155–1250 is disordered; the sequence is ELESGGSSVP…FGARNSSISF (96 aa). Polar residues predominate over residues 1217-1250; that stretch reads PNETSSPGSEKPSGSRTSIPVLTSFGARNSSISF.

Belongs to the SRCIN1 family. Interacts with the N-terminal coiled-coil region of SNAP25. Interacts with BCAR1/p130Cas and SRC through its C-terminal domain. Interacts with CSK, CTTN, SORBS3/vinexin, SYP and MAPRE3/EB3. Post-translationally, tyrosine-phosphorylated in response to EGF and to cell adhesion to integrin ligands. In terms of tissue distribution, expressed predominantly in central nervous system with high levels detected in cortex, cerebellum, midbrain and spinal cord (at protein level). Also expressed in testis and epithelial-rich tissues such as mammary gland, lung and kidney.

The protein localises to the cytoplasm. Its subcellular location is the cytoskeleton. The protein resides in the cell projection. It is found in the axon. It localises to the dendrite. The protein localises to the presynapse. Its subcellular location is the postsynapse. The protein resides in the postsynaptic density. Acts as a negative regulator of SRC by activating CSK which inhibits SRC activity and downstream signaling, leading to impaired cell spreading and migration. Regulates dendritic spine morphology. Involved in calcium-dependent exocytosis. May play a role in neurotransmitter release or synapse maintenance. In Mus musculus (Mouse), this protein is SRC kinase signaling inhibitor 1 (Srcin1).